Reading from the N-terminus, the 108-residue chain is UPF0060 membrane protein Sputw3181_1172 (108 aa).

The next 4 membrane-spanning stretches (helical) occupy residues 3–23, 31–51, 63–83, and 87–107; these read VITT…GCYL, GASA…AWLL, AAYG…VDGI, and RWDL…MFAP.

This sequence belongs to the UPF0060 family.

Its subcellular location is the cell inner membrane. The sequence is that of UPF0060 membrane protein Sputw3181_1172 from Shewanella sp. (strain W3-18-1).